Consider the following 723-residue polypeptide: Catalase-peroxidase (723 aa).

Residues 97–225 (WHAAGSYRVT…LAAVQMGLIY (129 aa)) constitute a cross-link (tryptophyl-tyrosyl-methioninium (Trp-Tyr) (with M-251)). His98 (proton acceptor) is an active-site residue. Positions 225 to 251 (YVNPEGVNGKSDPLATAAQMRETFARM) form a cross-link, tryptophyl-tyrosyl-methioninium (Tyr-Met) (with W-97). Heme b is bound at residue His266.

Belongs to the peroxidase family. Peroxidase/catalase subfamily. Homodimer or homotetramer. Heme b serves as cofactor. In terms of processing, formation of the three residue Trp-Tyr-Met cross-link is important for the catalase, but not the peroxidase activity of the enzyme.

The catalysed reaction is H2O2 + AH2 = A + 2 H2O. It carries out the reaction 2 H2O2 = O2 + 2 H2O. Its function is as follows. Bifunctional enzyme with both catalase and broad-spectrum peroxidase activity. Involved in tumorigenesis. The protein is Catalase-peroxidase of Rhizobium radiobacter (Agrobacterium tumefaciens).